A 94-amino-acid polypeptide reads, in one-letter code: DASH complex subunit dad2 (94 aa).

Residues 18–38 (KLRDSSNDMVQQIETLAAKLE) adopt a coiled-coil conformation. The interval 72–94 (VRIPPSTSNTNASATEQGDVEEV) is disordered. The span at 76–87 (PSTSNTNASATE) shows a compositional bias: polar residues.

The protein belongs to the DASH complex DAD2 family. Component of the DASH complex consisting of ask1, dad1, dad2, dad3, dad4, dam1, duo1, dad5, spc19 and spc34, with a stoichiometry of one copy of each subunit per complex. Multiple DASH complexes oligomerize to form a ring that encircles spindle microtubules and organizes the rod-like NDC80 complexes of the outer kinetochore. DASH complex oligomerization strengthens microtubule attachments. On cytoplasmic microtubules, DASH complexes appear to form patches instead of rings.

It is found in the nucleus. The protein resides in the cytoplasm. Its subcellular location is the cytoskeleton. It localises to the spindle. The protein localises to the chromosome. It is found in the centromere. The protein resides in the kinetochore. In terms of biological role, component of the DASH complex that connects microtubules with kinetochores and couples microtubule depolymerisation to chromosome movement; it is involved in retrieving kinetochores to the spindle poles before their re-orientation on the spindle in early mitosis and allows microtubule depolymerization to pull chromosomes apart and resist detachment during anaphase. Kinetochores, consisting of a centromere-associated inner segment and a microtubule-contacting outer segment, play a crucial role in chromosome segregation by mediating the physical connection between centromeric DNA and microtubules. Kinetochores also serve as an input point for the spindle assembly checkpoint, which delays anaphase until all chromosomes have bioriented on the mitotic spindle. The DASH complex mediates bipolar kinetochore-microtubule attachments and facilitates the formation of additional interactions between outer kinetochore components and spindle microtubules. During chromosome movement along the microtubule, it is required both for the sliding of kinetochores along the lateral side of the microtubule and also for microtubule end-on pulling on the kinetochore. Modulates cytoplasmic microtubule dynamics by tracking the plus-end of shortening microtubules and slowing their depolymerization. This chain is DASH complex subunit dad2, found in Schizosaccharomyces pombe (strain 972 / ATCC 24843) (Fission yeast).